A 460-amino-acid polypeptide reads, in one-letter code: Argininosuccinate lyase (460 aa).

This sequence belongs to the lyase 1 family. Argininosuccinate lyase subfamily.

It localises to the cytoplasm. It carries out the reaction 2-(N(omega)-L-arginino)succinate = fumarate + L-arginine. The protein operates within amino-acid biosynthesis; L-arginine biosynthesis; L-arginine from L-ornithine and carbamoyl phosphate: step 3/3. The sequence is that of Argininosuccinate lyase from Buchnera aphidicola subsp. Cinara cedri (strain Cc).